Reading from the N-terminus, the 241-residue chain is Cobalt transport protein CbiM (241 aa).

Positions 1 to 24 (MKKIKIISFSVAYLILLTPIYASA) are cleaved as a signal peptide. 6 helical membrane passes run 30–50 (GFLP…FIVG), 67–87 (LLLG…LPSV), 99–119 (LGTI…VLIF), 131–151 (TLGA…YFIF), 160–180 (SLAV…VTSL), and 202–222 (GIFA…TLIV).

This sequence belongs to the CbiM family. As to quaternary structure, forms an energy-coupling factor (ECF) transporter complex composed of an ATP-binding protein (A component, CbiO), a transmembrane protein (T component, CbiQ) and 2 possible substrate-capture proteins (S components, CbiM and CbiN) of unknown stoichimetry.

The protein resides in the cell membrane. It functions in the pathway cofactor biosynthesis; adenosylcobalamin biosynthesis. Its function is as follows. Part of the energy-coupling factor (ECF) transporter complex CbiMNOQ involved in cobalt import. The polypeptide is Cobalt transport protein CbiM (Acetoanaerobium sticklandii (strain ATCC 12662 / DSM 519 / JCM 1433 / CCUG 9281 / NCIMB 10654 / HF) (Clostridium sticklandii)).